We begin with the raw amino-acid sequence, 128 residues long: Insulin-like 3 (128 aa).

An N-terminal signal peptide occupies residues 1 to 15 (MHALLLLLLLALGSA). Intrachain disulfides connect C29–C113, C41–C126, and C112–C117. A compositionally biased stretch (low complexity) spans 81-94 (ALDPDPALDPQLPH). Positions 81–101 (ALDPDPALDPQLPHQASQRQR) are disordered.

It belongs to the insulin family. In terms of assembly, heterodimer of a B chain and an A chain linked by two disulfide bonds. Expressed in Leydig cells of the testis, and weakly in the theca interna cells of antral follicles and the corpus luteum of the ovary.

It localises to the secreted. Its function is as follows. Seems to play a role in testicular function. May be a trophic hormone with a role in testicular descent in fetal life. Is a ligand for LGR8 receptor. The chain is Insulin-like 3 (Insl3) from Rattus norvegicus (Rat).